Reading from the N-terminus, the 362-residue chain is Peptide chain release factor 1 (362 aa).

Gln-240 carries the post-translational modification N5-methylglutamine.

Belongs to the prokaryotic/mitochondrial release factor family. In terms of processing, methylated by PrmC. Methylation increases the termination efficiency of RF1.

Its subcellular location is the cytoplasm. Functionally, peptide chain release factor 1 directs the termination of translation in response to the peptide chain termination codons UAG and UAA. The protein is Peptide chain release factor 1 of Bifidobacterium adolescentis (strain ATCC 15703 / DSM 20083 / NCTC 11814 / E194a).